The sequence spans 433 residues: UDP-N-acetylglucosamine 1-carboxyvinyltransferase (433 aa).

22–23 (KN) is a binding site for phosphoenolpyruvate. Arg96 serves as a coordination point for UDP-N-acetyl-alpha-D-glucosamine. Cys120 functions as the Proton donor in the catalytic mechanism. Cys120 carries the 2-(S-cysteinyl)pyruvic acid O-phosphothioketal modification. UDP-N-acetyl-alpha-D-glucosamine-binding positions include 125-129 (RPIDL), Asp308, and Ile330.

It belongs to the EPSP synthase family. MurA subfamily.

Its subcellular location is the cytoplasm. The catalysed reaction is phosphoenolpyruvate + UDP-N-acetyl-alpha-D-glucosamine = UDP-N-acetyl-3-O-(1-carboxyvinyl)-alpha-D-glucosamine + phosphate. It participates in cell wall biogenesis; peptidoglycan biosynthesis. In terms of biological role, cell wall formation. Adds enolpyruvyl to UDP-N-acetylglucosamine. This Koribacter versatilis (strain Ellin345) protein is UDP-N-acetylglucosamine 1-carboxyvinyltransferase.